The following is a 1315-amino-acid chain: Claspin (1315 aa).

2 disordered regions span residues 22 to 276 (EAAD…AARL) and 345 to 474 (PADA…EQKT). 6 positions are modified to phosphoserine: serine 26, serine 42, serine 46, serine 53, serine 65, and serine 67. Acidic residues predominate over residues 65–74 (SDSEAEDRDD). The segment covering 91-101 (NLHSGKSQSRS) has biased composition (polar residues). Acidic residues predominate over residues 108–118 (DSDESDMEETP). 3 positions are modified to phosphoserine: serine 109, serine 112, and serine 119. The span at 119–128 (SQESPETQEA) shows a compositional bias: polar residues. 2 stretches are compositionally biased toward basic and acidic residues: residues 153–178 (LLREGAEGKAKSKRRLEKEERTMEKI) and 186–197 (TRCEESDADRPL). A coiled-coil region spans residues 159–187 (EGKAKSKRRLEKEERTMEKIRRLKKKETR). The segment covering 205–228 (EDSDLFETGLEEENDSALEDEESL) has biased composition (acidic residues). The residue at position 220 (serine 220) is a Phosphoserine. Over residues 235–245 (VKNKVKNRKKK) the composition is skewed to basic residues. Serine 255 is modified (phosphoserine). Basic and acidic residues-rich tracts occupy residues 391-415 (ACGKDPVRRGELEIEETEKHSDDRP) and 455-470 (EELKTVEKTDAKEGMP). The residue at position 522 (serine 522) is a Phosphoserine. Residues 599–626 (EKLQMLKAKLQEAMKLRRLEERQKRQAL) are a coiled coil. The interval 625 to 691 (ALFKLDNEDG…SSDIGKSVAL (67 aa)) is disordered. The segment covering 632–657 (EDGFEEEEEEEEMTDESEEDGEEETT) has biased composition (acidic residues). Positions 669 to 679 (KDEKETDKENT) are enriched in basic and acidic residues. Residues serine 698, serine 701, serine 709, serine 722, and serine 740 each carry the phosphoserine modification. The disordered stretch occupies residues 713–750 (MGYFPTEEKSETDEYLAKQSDKLDEDDSSSLLTKESSH). The segment covering 741–750 (SSLLTKESSH) has biased composition (low complexity). Residues serine 785, serine 787, serine 810, serine 816, and serine 823 each carry the phosphoserine modification. Position 868 is an N6-acetyllysine (lysine 868). CKB motif repeat units follow at residues 887-896 (ELLDLCTGQF) and 917-926 (ELLNLCSGKF). Position 893 is a phosphothreonine; by CHEK1 (threonine 893). Disordered stretches follow at residues 924–1002 (GKFP…NDEE) and 1032–1052 (EDEAEVSGSDVGSEDEYDGEE). Serine 932 carries the post-translational modification Phosphoserine. A CKB motif 3 repeat occupies 954 to 963 (EALALCSGSF). Positions 966–1063 (DREEEGEEEE…DEYEEDVIDE (98 aa)) are acidic patch. Acidic residues-rich tracts occupy residues 967–977 (REEEGEEEEFG), 990–1002 (SDEDEHSDSNDEE), and 1043–1052 (GSEDEYDGEE). Serine 990, serine 996, and serine 998 each carry phosphoserine. Residues 1001 to 1036 (EELALDLEDDEEELLKQSEKMKRQMRLKKYLEDEAE) adopt a coiled-coil conformation. A phosphoserine mark is found at serine 1133 and serine 1265. The segment at 1264-1315 (LSPTKAEAAKDSSKPQVRRRGLSSMMSPSPKRLKTNGSSPGPKRSIFRYLES) is disordered.

Belongs to the claspin family. In terms of assembly, interacts (phosphorylation-dependent) with CHEK1; regulates CLSPN function in checkpoint for DNA damage and replication. Interacts with ATR and RAD9A and these interactions are slightly reduced during checkpoint activation. Interacts with BRCA1 and this interaction increases during checkpoint activation. Interacts with TIMELESS; the interaction is required for leading-strand replication. Associates with the MCM2-7 complex and other replisome factors. Interacts (via the acidic patch) with CDC7; the interaction is required for phosphorylation of MCM proteins and CLASPIN by CDC7. Interacts with PCNA. Interacts with FZR1. Post-translationally, phosphorylated. Undergoes ATR-dependent phosphorylation by CHEK1 during activation of DNA replication or damage checkpoints. Phosphorylation by CSNK1G1/CK1 promotes CHEK1 binding. Phosphorylated by CDC7 during DNA replication, phosphorylation inhibits interaction between the acidic patch and N-terminal segments leading to increased binding to DNA and PCNA. In terms of processing, ubiquitinated by the anaphase promoting complex/cyclosome (APC/C) during G1 phase, leading to its degradation by the proteasome. Ubiquitination is mediated via its interaction with FZR1/CDH1. Following DNA damage, it is deubiquitinated by USP28 in G2 phase, preventing its degradation. Proteolytically cleaved by caspase-7 (CASP7) in response to apoptosis, leading to its inactivation.

The protein localises to the nucleus. Functionally, required for checkpoint mediated cell cycle arrest in response to inhibition of DNA replication or to DNA damage induced by both ionizing and UV irradiation. Adapter protein which binds to BRCA1 and the checkpoint kinase CHEK1 and facilitates the ATR-dependent phosphorylation of both proteins. Also required to maintain normal rates of replication fork progression during unperturbed DNA replication. Binds directly to DNA, with particular affinity for branched or forked molecules and interacts with multiple protein components of the replisome such as the MCM2-7 complex and TIMELESS. Important for initiation of DNA replication, recruits kinase CDC7 to phosphorylate MCM2-7 components. The protein is Claspin (Clspn) of Mus musculus (Mouse).